The primary structure comprises 315 residues: Olfactory receptor 11A1 (315 aa).

Residues 1 to 27 (MEIVSTGNETITEFVLLGFYDIPELHF) are Extracellular-facing. Residue Asn-8 is glycosylated (N-linked (GlcNAc...) asparagine). A helical transmembrane segment spans residues 28–48 (LFFIVFTAVYVFIIIGNMLII). Over 49–56 (VAVVSSQR) the chain is Cytoplasmic. Residues 57–77 (LHKPMYIFLANLSFLDILYTS) traverse the membrane as a helical segment. Residues 78-100 (AVMPKMLEGFLQEATISVAGCLL) are Extracellular-facing. The cysteines at positions 98 and 190 are disulfide-linked. A helical transmembrane segment spans residues 101-121 (QFFIFGSLATAECLLLAVMAY). Residues 122 to 140 (DRYLAICYPLHYPLLMGPR) lie on the Cytoplasmic side of the membrane. Residues 141-161 (RYMGLVVTTWLSGFVVDGLVV) form a helical membrane-spanning segment. At 162–198 (ALVAQLRFCGPNHIDQFYCDFMLFVGLACSDPRVAQV) the chain is on the extracellular side. A helical membrane pass occupies residues 199 to 218 (TTLILSVFCLTIPFGLILTS). Over 219–238 (YARIVVAVLRVPAGASRRRA) the chain is Cytoplasmic. Residues 239–259 (FSTCSSHLAVVTTFYGTLMIF) form a helical membrane-spanning segment. Residues 260 to 272 (YVAPSAVHSQLLS) are Extracellular-facing. The chain crosses the membrane as a helical span at residues 273-293 (KVFSLLYTVVTPLFNPVIYTM). Residues 294 to 315 (RNKEVHQALRKILCIKQTETLD) lie on the Cytoplasmic side of the membrane.

The protein belongs to the G-protein coupled receptor 1 family.

The protein localises to the cell membrane. Its function is as follows. Odorant receptor. The chain is Olfactory receptor 11A1 (OR11A1) from Homo sapiens (Human).